The chain runs to 501 residues: FKLASRRRLYNARVLQADNIGDKQRNPDVDAARQNTQIVVVGAGLPGLSAAQHLLYNGFRRTVILEATDRYGGRINTQRFGDTYCELGAKWVKIDGSQDSMYELLRNTEGLDKQIKQPDRATYLQDGSHINPAMVELIDTLFRQLCRGFKVSERVKTGGDLHSLDNVMNYFRTESDRIIGTSFQQPKDQLAAREIFQSLFKEFGSILGCCLEYVNIEHITKCPVQQELRPLYVPTGLDNVVDDLIQNMDKAQLQTGKPVGQIQWTPAPMKSVGCLDGSLYNADHIICTLPLGVLKSFAGVLFRPTLPLDKMLAIRNLGFGNPLKIYLSYKKPIGRWLKGSLRPLGTLLNPSAEQQPERNWTQQVVEISQVPSSQHVLEVHVGGGYYEEIEKLPDDELLEQITGLLRRCVSNNLVPYPQELLRSNWSTSACYLGGRPYFSTINSARDVQRLAAPLGEKSPGLLFAGDATSLNGFGTIDAARSSGIREAQRIIDFYLKRAHFG.

It localises to the cytoplasm. In terms of biological role, has a non-vital function. In Drosophila simulans (Fruit fly), this protein is Protein anon-37Cs (anon-37Cs).